Consider the following 144-residue polypeptide: Large ribosomal subunit protein uL16 (144 aa).

Belongs to the universal ribosomal protein uL16 family. Part of the 50S ribosomal subunit.

Its function is as follows. Binds 23S rRNA and is also seen to make contacts with the A and possibly P site tRNAs. The chain is Large ribosomal subunit protein uL16 from Halalkalibacterium halodurans (strain ATCC BAA-125 / DSM 18197 / FERM 7344 / JCM 9153 / C-125) (Bacillus halodurans).